A 235-amino-acid polypeptide reads, in one-letter code: Large ribosomal subunit protein uL1 (235 aa).

It belongs to the universal ribosomal protein uL1 family. Part of the 50S ribosomal subunit.

Its function is as follows. Binds directly to 23S rRNA. The L1 stalk is quite mobile in the ribosome, and is involved in E site tRNA release. In terms of biological role, protein L1 is also a translational repressor protein, it controls the translation of the L11 operon by binding to its mRNA. The polypeptide is Large ribosomal subunit protein uL1 (Blochmanniella floridana).